A 270-amino-acid chain; its full sequence is CASP-like protein 4A1 (270 aa).

Residues 1–110 (MEELEKTQKF…PSFSSSSSTP (110 aa)) are disordered. Residues 1–121 (MEELEKTQKF…ESKWASLIRK (121 aa)) are Cytoplasmic-facing. The segment covering 24–66 (SSPINFEMSSRSSLHSLPQTTIESPPDSPTLSSIPDSHGSSPH) has biased composition (polar residues). A compositionally biased stretch (basic and acidic residues) spans 85–97 (NGEEEKKVSESRR). Over residues 100–110 (RPSFSSSSSTP) the composition is skewed to low complexity. Residues 122–142 (ALLGFRVIAFVSCLVSFSVMV) traverse the membrane as a helical segment. Over 143–161 (SDRDKGWAHDSFYNYKEFR) the chain is Extracellular. Residues 162–182 (FCLAANVIGFVYSGFMICDLV) form a helical membrane-spanning segment. Residues 183–198 (YLLSTSIRRSRHNLRH) lie on the Cytoplasmic side of the membrane. A helical membrane pass occupies residues 199-221 (FLEFGLDQMLAYLLASASTSASI). Topologically, residues 222-246 (RVDDWQSNWGADKFPDLARASVALS) are extracellular. Residues 247 to 267 (YVSFVAFAFCSLASGYALCAL) form a helical membrane-spanning segment. Over 268 to 270 (RSI) the chain is Cytoplasmic.

This sequence belongs to the Casparian strip membrane proteins (CASP) family. As to quaternary structure, homodimer and heterodimers.

It is found in the cell membrane. In Arabidopsis thaliana (Mouse-ear cress), this protein is CASP-like protein 4A1.